The chain runs to 565 residues: Coiled-coil domain-containing protein 17 (565 aa).

The interval 58-87 (IMAQEKSRDQEASTSALKRLTEETAGSPGE) is disordered. Coiled coils occupy residues 97–160 (ARRM…TLGA) and 219–271 (LQLQ…KVLS).

The polypeptide is Coiled-coil domain-containing protein 17 (Ccdc17) (Mus musculus (Mouse)).